Consider the following 277-residue polypeptide: MEMO1 family protein Tpet_0837 (277 aa).

The protein belongs to the MEMO1 family.

This is MEMO1 family protein Tpet_0837 from Thermotoga petrophila (strain ATCC BAA-488 / DSM 13995 / JCM 10881 / RKU-1).